A 222-amino-acid polypeptide reads, in one-letter code: Glutathione S-transferase A1 (222 aa).

The residue at position 1 (methionine 1) is an N-acetylmethionine. Alanine 2 carries the N-acetylalanine; in Glutathione S-transferase A1, N-terminally processed modification. One can recognise a GST N-terminal domain in the interval 3–83; the sequence is EKPKLHYFNA…YIASKYNLYG (81 aa). An N6-succinyllysine modification is found at lysine 4. Residues tyrosine 9, arginine 45, 54-55, and 67-68 contribute to the glutathione site; these read QV and QT. The GST C-terminal domain maps to 85–207; sequence DIKERALIDM…LQPGSPRKPP (123 aa).

Belongs to the GST superfamily. Alpha family. As to quaternary structure, homodimer or heterodimer of GSTA1 and GSTA2. As to expression, liver.

The protein localises to the cytoplasm. It carries out the reaction RX + glutathione = an S-substituted glutathione + a halide anion + H(+). It catalyses the reaction prostaglandin A2 + glutathione = prostaglandin A2-S-(R)-glutathione. The catalysed reaction is prostaglandin J2 + glutathione = prostaglandin J2-S-(R)-glutathione. The enzyme catalyses (13S)-hydroperoxy-(9Z,11E)-octadecadienoate + 2 glutathione = (13S)-hydroxy-(9Z,11E)-octadecadienoate + glutathione disulfide + H2O. It carries out the reaction androst-5-ene-3,17-dione = androst-4-ene-3,17-dione. The isomerase activity is inhibited by S-methylglutathione (GSMe). Functionally, glutathione S-transferase that catalyzes the nucleophilic attack of the sulfur atom of glutathione on the electrophilic groups of a wide range of exogenous and endogenous compounds. Involved in the formation of glutathione conjugates of both prostaglandin A2 (PGA2) and prostaglandin J2 (PGJ2). It also catalyzes the isomerization of D5-androstene-3,17-dione (AD) into D4-androstene-3,17-dione and may therefore play an important role in hormone biosynthesis. Through its glutathione-dependent peroxidase activity toward the fatty acid hydroperoxide (13S)-hydroperoxy-(9Z,11E)-octadecadienoate/13-HPODE it is also involved in the metabolism of oxidized linoleic acid. The protein is Glutathione S-transferase A1 (GSTA1) of Homo sapiens (Human).